The sequence spans 587 residues: Polyphenol oxidase E, chloroplastic (587 aa).

A chloroplast-targeting transit peptide spans 1 to 87 (MSSSSSITTT…AANLAPLATA (87 aa)). Cystine bridges form between cysteine 98–cysteine 114 and cysteine 113–cysteine 180. Cu cation is bound by residues histidine 179, histidine 197, histidine 206, histidine 328, histidine 332, and histidine 363. The 2'-(S-cysteinyl)-histidine (Cys-His) cross-link spans 183 to 197 (CNGAYKVGGKELQVH).

Belongs to the tyrosinase family. Requires Cu(2+) as cofactor.

The protein resides in the plastid. It is found in the chloroplast thylakoid lumen. It carries out the reaction 2 catechol + O2 = 2 1,2-benzoquinone + 2 H2O. In terms of biological role, catalyzes the oxidation of mono- and o-diphenols to o-diquinones. In Solanum lycopersicum (Tomato), this protein is Polyphenol oxidase E, chloroplastic.